Here is a 184-residue protein sequence, read N- to C-terminus: Large ribosomal subunit protein uL5c (184 aa).

Belongs to the universal ribosomal protein uL5 family. Part of the 50S ribosomal subunit; contacts the 5S rRNA.

Its subcellular location is the plastid. It localises to the chloroplast. Functionally, binds 5S rRNA, forms part of the central protuberance of the 50S subunit. This is Large ribosomal subunit protein uL5c (rpl5) from Ostreococcus tauri.